The sequence spans 1182 residues: WD repeat-containing protein on Y chromosome (1182 aa).

WD repeat units lie at residues 155-199 (EEIT…LRSA), 323-362 (RIPL…EPSA), 366-405 (GHNG…LLQT), 456-495 (THAA…RKII), 508-547 (TIDI…VVRN), 595-635 (FHTD…RRYN), 740-779 (KTGD…IPKA), and 823-862 (GHLK…LGTL). The segment at 1031 to 1182 (TKAGANLDQP…PKAKTDRETH (152 aa)) is disordered. Composition is skewed to low complexity over residues 1079–1092 (GVSS…VSQG) and 1103–1121 (TTSL…PKGS).

This is WD repeat-containing protein on Y chromosome from Drosophila virilis (Fruit fly).